Here is a 139-residue protein sequence, read N- to C-terminus: Ribulose bisphosphate carboxylase small subunit (139 aa).

Belongs to the RuBisCO small chain family. In terms of assembly, heterohexadecamer of 8 large and 8 small subunits.

The protein resides in the plastid. Its subcellular location is the chloroplast. Its function is as follows. RuBisCO catalyzes two reactions: the carboxylation of D-ribulose 1,5-bisphosphate, the primary event in carbon dioxide fixation, as well as the oxidative fragmentation of the pentose substrate in the photorespiration process. Both reactions occur simultaneously and in competition at the same active site. Although the small subunit is not catalytic it is essential for maximal activity. This is Ribulose bisphosphate carboxylase small subunit from Ectocarpus siliculosus (Brown alga).